Here is a 322-residue protein sequence, read N- to C-terminus: MPFHIGSGCLPAIISNRRIYRIAWSDTPPEMSSWEKMKEFFCSTHQAEALECIWTICHPPAGTTREDVVSRFELLRTLAYDGWEENIHSGLHGENYFCILDEDSQEILSVTLDDVGNYTVNCQGYSETHHLTMATEPGVERTDITYNLTSDIDAAAYLEELKQNPIINNKIMNPVGQCESLMTPVSNFMNEKGFDNIRYRGIFIWDKPTEEIPTNHFAVVGNKEGKDYVFDVSAHQFENRGMSNLNGPLILSADEWVCKYRMATRRKLIYYTDFSNSSIAANAYDALPRELESESMAGKVFVTSPRWFNTFKKQKYSLIGKM.

Interacts with host IQGAP1 and host TRIP6 (thyroid receptor-interacting protein 6).

The protein localises to the secreted. It is found in the host cytoplasm. In terms of biological role, effector proteins function to alter host cell physiology and promote bacterial survival in host tissues. This protein is required to maintain a long-term chronic systemic infection in mice. It inhibits normal cell migration of primary macrophages and dendritic cells, by a mechanism that involves interaction with the host factor IQGAP1, an important regulator of the cytoskeleton and cell migration. Also accelerates the systemic spread of infection from the gastrointestinal tract to the bloodstream, probably by interacting with host TRIP6. In Salmonella typhimurium (strain LT2 / SGSC1412 / ATCC 700720), this protein is Secreted effector protein SseI (sseI).